We begin with the raw amino-acid sequence, 259 residues long: Type III pantothenate kinase (259 aa).

6-13 (DVGNTNIV) provides a ligand contact to ATP. Residues Tyr-100 and 107-110 (GADR) contribute to the substrate site. The Proton acceptor role is filled by Asp-109. Asp-129 serves as a coordination point for K(+). Residue Thr-132 coordinates ATP. Thr-184 contacts substrate.

Belongs to the type III pantothenate kinase family. Homodimer. NH4(+) is required as a cofactor. It depends on K(+) as a cofactor.

It is found in the cytoplasm. It carries out the reaction (R)-pantothenate + ATP = (R)-4'-phosphopantothenate + ADP + H(+). It participates in cofactor biosynthesis; coenzyme A biosynthesis; CoA from (R)-pantothenate: step 1/5. Functionally, catalyzes the phosphorylation of pantothenate (Pan), the first step in CoA biosynthesis. The sequence is that of Type III pantothenate kinase from Clostridium kluyveri (strain NBRC 12016).